Reading from the N-terminus, the 455-residue chain is Ribulose bisphosphate carboxylase large chain (455 aa).

Residue lysine 5 is modified to N6,N6,N6-trimethyllysine. Positions 114 and 164 each coordinate substrate. The Proton acceptor role is filled by lysine 166. Lysine 168 lines the substrate pocket. Positions 192, 194, and 195 each coordinate Mg(2+). Lysine 192 carries the N6-carboxylysine modification. Residue histidine 285 is the Proton acceptor of the active site. Residues arginine 286, histidine 318, and serine 370 each coordinate substrate.

It belongs to the RuBisCO large chain family. Type I subfamily. As to quaternary structure, heterohexadecamer of 8 large chains and 8 small chains; disulfide-linked. The disulfide link is formed within the large subunit homodimers. It depends on Mg(2+) as a cofactor. The disulfide bond which can form in the large chain dimeric partners within the hexadecamer appears to be associated with oxidative stress and protein turnover.

It localises to the plastid. The protein resides in the chloroplast. It catalyses the reaction 2 (2R)-3-phosphoglycerate + 2 H(+) = D-ribulose 1,5-bisphosphate + CO2 + H2O. It carries out the reaction D-ribulose 1,5-bisphosphate + O2 = 2-phosphoglycolate + (2R)-3-phosphoglycerate + 2 H(+). Functionally, ruBisCO catalyzes two reactions: the carboxylation of D-ribulose 1,5-bisphosphate, the primary event in carbon dioxide fixation, as well as the oxidative fragmentation of the pentose substrate in the photorespiration process. Both reactions occur simultaneously and in competition at the same active site. The sequence is that of Ribulose bisphosphate carboxylase large chain from Lupinus latifolius (Broad-leaved lupine).